The primary structure comprises 129 residues: Small ribosomal subunit protein uS11c (129 aa).

This sequence belongs to the universal ribosomal protein uS11 family. In terms of assembly, part of the 30S ribosomal subunit.

Its subcellular location is the plastid. It localises to the chloroplast. The sequence is that of Small ribosomal subunit protein uS11c from Gracilaria tenuistipitata var. liui (Red alga).